We begin with the raw amino-acid sequence, 407 residues long: 3-oxoacyl-[acyl-carrier-protein] synthase 1 (407 aa).

One can recognise a Ketosynthase family 3 (KS3) domain in the interval 1–405; sequence MKRVVITGLG…GTNVSLIIKK (405 aa). Catalysis depends on for beta-ketoacyl synthase activity residues Cys164, His299, and His335.

This sequence belongs to the thiolase-like superfamily. Beta-ketoacyl-ACP synthases family. As to quaternary structure, homodimer.

Its subcellular location is the cytoplasm. It carries out the reaction a fatty acyl-[ACP] + malonyl-[ACP] + H(+) = a 3-oxoacyl-[ACP] + holo-[ACP] + CO2. The catalysed reaction is (3Z)-decenoyl-[ACP] + malonyl-[ACP] + H(+) = 3-oxo-(5Z)-dodecenoyl-[ACP] + holo-[ACP] + CO2. Its pathway is lipid metabolism; fatty acid biosynthesis. In terms of biological role, involved in the type II fatty acid elongation cycle. Catalyzes the elongation of a wide range of acyl-ACP by the addition of two carbons from malonyl-ACP to an acyl acceptor. Can also use unsaturated fatty acids. Catalyzes a key reaction in unsaturated fatty acid (UFA) synthesis, the elongation of the cis-3-decenoyl-ACP produced by FabA. The protein is 3-oxoacyl-[acyl-carrier-protein] synthase 1 (fabB) of Buchnera aphidicola subsp. Baizongia pistaciae (strain Bp).